A 1088-amino-acid chain; its full sequence is Adenylate-forming reductase Nps10 (1088 aa).

The tract at residues 1 to 22 (MSSVSIQIPLPTPPPTQAHNSQ) is disordered. The interval 38–451 (FDWHSKNSPN…KIFGRTDDQI (414 aa)) is adenylation (A) domain. AMP contacts are provided by residues H261, 357-358 (NL), T362, and 443-446 (IFGR). The region spanning 586–668 (AWDSAKTLGF…SLASFVSSVA (83 aa)) is the Carrier domain. The residue at position 621 (S621) is an O-(pantetheine 4'-phosphoryl)serine. Residues 712 to 951 (LTGSTGALGS…IPVNVAAAAI (240 aa)) are reductase (R) domain. Residues 716 to 719 (TGAL), 804 to 806 (NAW), Y875, and K879 contribute to the NADP(+) site.

Belongs to the adenylate-forming reductase family.

Functionally, adenylate-forming reductase, a natural product biosynthesis enzyme that resembles non-ribosomal peptide synthetases, yet serves to modify one substrate, rather than to condense two or more building blocks. The A-domain preferentially accepts phenylpyruvic acid and benzoic acid as substrate. The natural product of the enzyme is not yet known. The protein is Adenylate-forming reductase Nps10 of Heterobasidion annosum (Root rot fungus).